The primary structure comprises 203 residues: LexA repressor (203 aa).

A DNA-binding region (H-T-H motif) is located at residues 28-47 (IREIGDEFGITAKGAYDHLK). Active-site for autocatalytic cleavage activity residues include Ser127 and Lys164.

The protein belongs to the peptidase S24 family. As to quaternary structure, homodimer.

It carries out the reaction Hydrolysis of Ala-|-Gly bond in repressor LexA.. Represses a number of genes involved in the response to DNA damage (SOS response), including recA and lexA. In the presence of single-stranded DNA, RecA interacts with LexA causing an autocatalytic cleavage which disrupts the DNA-binding part of LexA, leading to derepression of the SOS regulon and eventually DNA repair. In Leptospira interrogans serogroup Icterohaemorrhagiae serovar copenhageni (strain Fiocruz L1-130), this protein is LexA repressor.